The sequence spans 501 residues: Aldehyde dehydrogenase, cytosolic 1 (501 aa).

S2 bears the N-acetylserine mark. An N6-acetyllysine mark is found at K91 and K128. Position 246–251 (246–251 (GSTEVG)) interacts with NAD(+). At K252 the chain carries N6-acetyllysine. E269 (proton acceptor) is an active-site residue. C303 functions as the Nucleophile in the catalytic mechanism. Residues K353, K367, and K410 each carry the N6-acetyllysine modification. Position 413 is a phosphoserine (S413). Residues K419 and K435 each carry the N6-acetyllysine modification.

Belongs to the aldehyde dehydrogenase family. Homotetramer. In terms of tissue distribution, highest level in liver, high level in lung, low level in kidney and testis.

It localises to the cytoplasm. The enzyme catalyses an aldehyde + NAD(+) + H2O = a carboxylate + NADH + 2 H(+). Its pathway is alcohol metabolism; ethanol degradation; acetate from ethanol: step 2/2. In terms of biological role, can oxidize benzaldehyde, propionaldehyde and acetaldehyde. No detectable activity with retinal. This is Aldehyde dehydrogenase, cytosolic 1 from Mus musculus (Mouse).